A 425-amino-acid chain; its full sequence is Protein CLP1 homolog (425 aa).

ATP-binding positions include glutamate 18, lysine 59, and 121-126 (DVGKST).

It belongs to the Clp1 family. Clp1 subfamily.

It localises to the nucleus. Functionally, required for endonucleolytic cleavage during polyadenylation-dependent pre-mRNA 3'-end formation. This is Protein CLP1 homolog (cbc) from Drosophila persimilis (Fruit fly).